A 61-amino-acid chain; its full sequence is Large ribosomal subunit protein eL24 (61 aa).

The Zn(2+) site is built by Cys-7, Cys-10, Cys-33, and Cys-37. The segment at 7-37 adopts a C4-type zinc-finger fold; it reads CSFCGGDIPPATGMMHVRNDGTILWFCSNKC.

This sequence belongs to the eukaryotic ribosomal protein eL24 family. As to quaternary structure, part of the 50S ribosomal subunit. Forms a cluster with proteins L3 and L14. The cofactor is Zn(2+).

Its function is as follows. Binds to the 23S rRNA. This is Large ribosomal subunit protein eL24 from Metallosphaera sedula (strain ATCC 51363 / DSM 5348 / JCM 9185 / NBRC 15509 / TH2).